A 190-amino-acid polypeptide reads, in one-letter code: Bifunctional protein PyrR (190 aa).

The PRPP-binding signature appears at 107–119 (IILVDDVLYSGRT).

It belongs to the purine/pyrimidine phosphoribosyltransferase family. PyrR subfamily.

It carries out the reaction UMP + diphosphate = 5-phospho-alpha-D-ribose 1-diphosphate + uracil. Regulates the transcription of the pyrimidine nucleotide (pyr) operon in response to exogenous pyrimidines. In terms of biological role, also displays a weak uracil phosphoribosyltransferase activity which is not physiologically significant. The protein is Bifunctional protein PyrR of Corynebacterium diphtheriae (strain ATCC 700971 / NCTC 13129 / Biotype gravis).